The sequence spans 555 residues: Formate--tetrahydrofolate ligase (555 aa).

ATP is bound at residue 64–71 (TKAGIGKT).

This sequence belongs to the formate--tetrahydrofolate ligase family.

It catalyses the reaction (6S)-5,6,7,8-tetrahydrofolate + formate + ATP = (6R)-10-formyltetrahydrofolate + ADP + phosphate. It functions in the pathway one-carbon metabolism; tetrahydrofolate interconversion. This is Formate--tetrahydrofolate ligase from Parabacteroides distasonis (strain ATCC 8503 / DSM 20701 / CIP 104284 / JCM 5825 / NCTC 11152).